The primary structure comprises 1438 residues: DNA polymerase III PolC-type (1438 aa).

The 157-residue stretch at Y422–F578 folds into the Exonuclease domain.

Belongs to the DNA polymerase type-C family. PolC subfamily.

The protein localises to the cytoplasm. The enzyme catalyses DNA(n) + a 2'-deoxyribonucleoside 5'-triphosphate = DNA(n+1) + diphosphate. Its function is as follows. Required for replicative DNA synthesis. This DNA polymerase also exhibits 3' to 5' exonuclease activity. This chain is DNA polymerase III PolC-type, found in Staphylococcus aureus (strain MSSA476).